The sequence spans 160 residues: Type IV major fimbrial protein FimA (160 aa).

Residues Met-1–Gly-7 constitute a propeptide, leader sequence. Residue Phe-8 is modified to N-methylphenylalanine. Residues Phe-8 to Ile-28 form a helical membrane-spanning segment. A disulfide bridge links Cys-63 with Cys-105.

Belongs to the N-Me-Phe pilin family. The pili are polar flexible filaments of about 5.4 nanometers diameter and 2.5 micrometers average length; they consist of only a single polypeptide chain arranged in a helical configuration of five subunits per turn in the assembled pilus.

The protein resides in the fimbrium. It is found in the membrane. Its function is as follows. Major component of the type IV fimbriae that plays an essential role in twitching motility, natural transformation, and protease secretion. The polypeptide is Type IV major fimbrial protein FimA (fimA) (Dichelobacter nodosus (Bacteroides nodosus)).